Here is a 381-residue protein sequence, read N- to C-terminus: cAMP-dependent protein kinase type I-beta regulatory subunit (381 aa).

Residues 2 to 136 (ASPPACPSEE…ALAKAISKNV (135 aa)) are dimerization and phosphorylation. Residue Ser-3 is modified to Phosphoserine. Residue Tyr-21 is modified to 3'-nitrotyrosine. The disordered stretch occupies residues 67-98 (ARQKSNSQSDSHDEEVSPTPPNPVVKARRRRG). 2 positions are modified to phosphoserine: Ser-77 and Ser-83. At Thr-85 the chain carries Phosphothreonine. The Pseudophosphorylation motif signature appears at 96-100 (RRGGV). Arg-97 bears the Omega-N-methylarginine mark. Residues 137–254 (LFAH…SKVS), Glu-202, Arg-211, 255–381 (ILES…SLTV), Glu-326, and Arg-335 each bind 3',5'-cyclic AMP.

It belongs to the cAMP-dependent kinase regulatory chain family. As to quaternary structure, the inactive holoenzyme is composed of two regulatory chains and two catalytic chains. Activation by cAMP releases the two active catalytic monomers and the regulatory dimer. Interacts with PRKX; regulates this cAMP-dependent protein kinase. Interacts with C2orf88/smAKAP; this interaction may target PRKAR1B to the plasma membrane. In terms of processing, the pseudophosphorylation site binds to the substrate-binding region of the catalytic chain, resulting in the inhibition of its activity. As to expression, four types of regulatory chains are found: I-alpha, I-beta, II-alpha, and II-beta. Their expression varies among tissues and is in some cases constitutive and in others inducible.

It localises to the cell membrane. In terms of biological role, regulatory subunit of the cAMP-dependent protein kinases involved in cAMP signaling in cells. The protein is cAMP-dependent protein kinase type I-beta regulatory subunit (PRKAR1B) of Homo sapiens (Human).